A 269-amino-acid polypeptide reads, in one-letter code: JmjC domain-containing protein 8 (269 aa).

Residues 1–24 (MAAAGRFGLLLLIVLWTMVTVVLP) form the signal peptide. Asparagine 135, asparagine 145, and asparagine 214 each carry an N-linked (GlcNAc...) asparagine glycan. The 123-residue stretch at 147–269 (TEWAPLFQHY…TSVFISTFLG (123 aa)) folds into the JmjC domain.

In terms of assembly, oligomer. Dimer. Interacts with PKM; regulates angiogenesis and metabolism. In terms of processing, N-glycosylated.

The protein localises to the endoplasmic reticulum lumen. The protein resides in the cytoplasm. Functions as a positive regulator of TNF-induced NF-kappaB signaling. Regulates angiogenesis and cellular metabolism through interaction with PKM. This Rattus norvegicus (Rat) protein is JmjC domain-containing protein 8.